A 157-amino-acid chain; its full sequence is Small ribosomal subunit protein uS7 (157 aa).

Belongs to the universal ribosomal protein uS7 family. In terms of assembly, part of the 30S ribosomal subunit. Contacts proteins S9 and S11.

Its function is as follows. One of the primary rRNA binding proteins, it binds directly to 16S rRNA where it nucleates assembly of the head domain of the 30S subunit. Is located at the subunit interface close to the decoding center, probably blocks exit of the E-site tRNA. The sequence is that of Small ribosomal subunit protein uS7 from Pseudomonas fluorescens (strain Pf0-1).